We begin with the raw amino-acid sequence, 968 residues long: RNA polymerase-associated protein RapA (968 aa).

The Helicase ATP-binding domain maps to 163-332; it reads EVGQRFAPRV…FARLRLLDPD (170 aa). 176-183 contributes to the ATP binding site; sequence DEVGLGKT. A DEAH box motif is present at residues 278–281; the sequence is DEAH. Residues 491–678 form the Helicase C-terminal domain; it reads RVDWLIDFLK…NTKSRYQELK (188 aa).

The protein belongs to the SNF2/RAD54 helicase family. RapA subfamily. In terms of assembly, interacts with the RNAP. Has a higher affinity for the core RNAP than for the holoenzyme. Its ATPase activity is stimulated by binding to RNAP.

Transcription regulator that activates transcription by stimulating RNA polymerase (RNAP) recycling in case of stress conditions such as supercoiled DNA or high salt concentrations. Probably acts by releasing the RNAP, when it is trapped or immobilized on tightly supercoiled DNA. Does not activate transcription on linear DNA. Probably not involved in DNA repair. This Shewanella piezotolerans (strain WP3 / JCM 13877) protein is RNA polymerase-associated protein RapA.